A 571-amino-acid chain; its full sequence is Urease subunit alpha (571 aa).

Ni(2+)-binding residues include His138, His140, and Lys221. Lys221 is subject to N6-carboxylysine. Substrate is bound at residue His223. His250 and His276 together coordinate Ni(2+). His324 (proton donor) is an active-site residue. Residue Asp364 participates in Ni(2+) binding.

The protein belongs to the metallo-dependent hydrolases superfamily. Urease alpha subunit family. As to quaternary structure, heterotrimer of UreA (gamma), UreB (beta) and UreC (alpha) subunits. Three heterotrimers associate to form the active enzyme. Requires Ni cation as cofactor. Post-translationally, carboxylation allows a single lysine to coordinate two nickel ions.

The protein resides in the cytoplasm. It catalyses the reaction urea + 2 H2O + H(+) = hydrogencarbonate + 2 NH4(+). It functions in the pathway nitrogen metabolism; urea degradation; CO(2) and NH(3) from urea (urease route): step 1/1. This is Urease subunit alpha from Staphylococcus aureus (strain JH9).